A 254-amino-acid chain; its full sequence is Ciliary microtubule associated protein 1A (254 aa).

2 STPGR repeats span residues 180–205 (PGPAAYRQTDVQVTKFKAPQYTMAAR) and 216–241 (PGPGAHSPEKVTMTRPCAPVVSFGIK). The disordered stretch occupies residues 207–226 (EPPGDKTLKPGPGAHSPEKV).

It belongs to the CIMAP family. Microtubule inner protein component of sperm flagellar doublet microtubules.

It is found in the cytoplasm. Its subcellular location is the cytoskeleton. The protein resides in the flagellum axoneme. Its function is as follows. Outer dense fibers are filamentous structures located on the outside of the axoneme in the midpiece and principal piece of the mammalian sperm tail. May help to maintain the passive elastic structures and elastic recoil of the sperm tail. The chain is Ciliary microtubule associated protein 1A (CIMAP1A) from Bos taurus (Bovine).